An 845-amino-acid chain; its full sequence is Protein translocase subunit SecA (845 aa).

ATP-binding positions include Gln85, 103 to 107, and Asp492; that span reads GEGKT. Positions 787-845 are disordered; the sequence is REQVAQGQAEHPETEQDAAAQSNTSAKRQPVRVDKKVGRNDLCPCGSGKKFKNCHGRNA. The Zn(2+) site is built by Cys829, Cys831, Cys840, and His841. Residues 835 to 845 show a composition bias toward basic residues; sequence KKFKNCHGRNA.

Belongs to the SecA family. As to quaternary structure, monomer and homodimer. Part of the essential Sec protein translocation apparatus which comprises SecA, SecYEG and auxiliary proteins SecDF. Other proteins may also be involved. Requires Zn(2+) as cofactor.

Its subcellular location is the cell membrane. The protein localises to the cytoplasm. The catalysed reaction is ATP + H2O + cellular proteinSide 1 = ADP + phosphate + cellular proteinSide 2.. In terms of biological role, part of the Sec protein translocase complex. Interacts with the SecYEG preprotein conducting channel. Has a central role in coupling the hydrolysis of ATP to the transfer of proteins into and across the cell membrane, serving as an ATP-driven molecular motor driving the stepwise translocation of polypeptide chains across the membrane. In Enterococcus faecalis (strain ATCC 700802 / V583), this protein is Protein translocase subunit SecA.